Here is a 580-residue protein sequence, read N- to C-terminus: uncharacterized protein (580 aa).

The segment covering 1–44 (MSESSVNADTPKNTNDVLNGAYQSATTEPEGQYRSATDNPSLYQ) has biased composition (polar residues). The tract at residues 1-45 (MSESSVNADTPKNTNDVLNGAYQSATTEPEGQYRSATDNPSLYQV) is disordered. At S99 the chain carries Phosphoserine. 12 consecutive transmembrane segments (helical) span residues 143 to 163 (IYAYASLTIAWGSSVLSPASA), 177 to 197 (LLNVSLFMLGYCLGPICWAPM), 207 to 227 (LYIGLFLFSVFQIAVATAQDI), 235 to 255 (FFGGYGACVPLCVVAAAFADM), 265 to 285 (ITIFAAVIFVGPLVAPIVGGF), 295 to 315 (WTEYITSFMGFLSIILIYLFC), 370 to 390 (PIVFLVSLYCSFVYAIIYLLL), 405 to 425 (LGVSALPYIGILVGVFIGCGI), 450 to 470 (LPPMMIGSFLFPAGIFWLAWS), 476 to 496 (VHWIVPTLSGLLTGAGILLIF), 511 to 533 (AASVFAANVIMRSAVAGGFPLFA), and 546 to 566 (GSLLGFIATALIPMPFAFFFF).

Belongs to the major facilitator superfamily. CAR1 family.

It is found in the membrane. This is an uncharacterized protein from Schizosaccharomyces pombe (strain 972 / ATCC 24843) (Fission yeast).